Consider the following 106-residue polypeptide: Pyrimidine/purine nucleoside phosphorylase (106 aa).

The protein belongs to the nucleoside phosphorylase PpnP family.

The catalysed reaction is a purine D-ribonucleoside + phosphate = a purine nucleobase + alpha-D-ribose 1-phosphate. It carries out the reaction adenosine + phosphate = alpha-D-ribose 1-phosphate + adenine. It catalyses the reaction cytidine + phosphate = cytosine + alpha-D-ribose 1-phosphate. The enzyme catalyses guanosine + phosphate = alpha-D-ribose 1-phosphate + guanine. The catalysed reaction is inosine + phosphate = alpha-D-ribose 1-phosphate + hypoxanthine. It carries out the reaction thymidine + phosphate = 2-deoxy-alpha-D-ribose 1-phosphate + thymine. It catalyses the reaction uridine + phosphate = alpha-D-ribose 1-phosphate + uracil. The enzyme catalyses xanthosine + phosphate = alpha-D-ribose 1-phosphate + xanthine. Catalyzes the phosphorolysis of diverse nucleosides, yielding D-ribose 1-phosphate and the respective free bases. Can use uridine, adenosine, guanosine, cytidine, thymidine, inosine and xanthosine as substrates. Also catalyzes the reverse reactions. In Paraburkholderia xenovorans (strain LB400), this protein is Pyrimidine/purine nucleoside phosphorylase.